The sequence spans 433 residues: Phosphomethylpyrimidine synthase 2 (433 aa).

Substrate contacts are provided by residues N66, M94, Y123, H162, 184 to 186 (SRG), 225 to 228 (DALR), and E264. Residue H268 participates in Zn(2+) binding. Y291 provides a ligand contact to substrate. H332 contacts Zn(2+). Residues C408, C411, and C415 each coordinate [4Fe-4S] cluster.

Belongs to the ThiC family. The cofactor is [4Fe-4S] cluster.

The enzyme catalyses 5-amino-1-(5-phospho-beta-D-ribosyl)imidazole + S-adenosyl-L-methionine = 4-amino-2-methyl-5-(phosphooxymethyl)pyrimidine + CO + 5'-deoxyadenosine + formate + L-methionine + 3 H(+). The protein operates within cofactor biosynthesis; thiamine diphosphate biosynthesis. Its function is as follows. Catalyzes the synthesis of the hydroxymethylpyrimidine phosphate (HMP-P) moiety of thiamine from aminoimidazole ribotide (AIR) in a radical S-adenosyl-L-methionine (SAM)-dependent reaction. In Saccharolobus solfataricus (strain ATCC 35092 / DSM 1617 / JCM 11322 / P2) (Sulfolobus solfataricus), this protein is Phosphomethylpyrimidine synthase 2.